Consider the following 275-residue polypeptide: COP9 signalosome complex subunit 7a (275 aa).

Serine 2 is modified (N-acetylserine). The PCI domain maps to 2-159; that stretch reads SAEVKVTGQN…QRLEVDYSIG (158 aa). A coiled-coil region spans residues 185 to 233; the sequence is LSGIEEQVSRANQHKEQQLGLKQQIESEVANLKKTIKVTTAAAAAATSQ. The interval 227-275 is disordered; sequence AAAATSQDPEQHLTELREPAPGTNQRQPSKKASKGKGLRGSAKIWSKSN. Positions 235 to 244 are enriched in basic and acidic residues; sequence PEQHLTELRE. The segment covering 254-263 has biased composition (basic residues); that stretch reads PSKKASKGKG.

This sequence belongs to the CSN7/EIF3M family. CSN7 subfamily. As to quaternary structure, component of the CSN complex, composed of COPS1/GPS1, COPS2, COPS3, COPS4, COPS5, COPS6, COPS7 (COPS7A or COPS7B), COPS8 and COPS9. In the complex, it probably interacts directly with COPS1, COPS2, COPS4, COPS5, COPS6 and COPS8. Interacts with PMF1. Interacts with the translation initiation factor EIF3S6. Interacts with CK2 and PKD. Interacts directly with ID3. Post-translationally, phosphorylated by CK2 and PKD kinases.

Its subcellular location is the cytoplasm. It is found in the nucleus. Its function is as follows. Component of the COP9 signalosome complex (CSN), a complex involved in various cellular and developmental processes. The CSN complex is an essential regulator of the ubiquitin (Ubl) conjugation pathway by mediating the deneddylation of the cullin subunits of SCF-type E3 ligase complexes, leading to decrease the Ubl ligase activity of SCF-type complexes such as SCF, CSA or DDB2. The complex is also involved in phosphorylation of p53/TP53, JUN, I-kappa-B-alpha/NFKBIA, ITPK1 and IRF8/ICSBP, possibly via its association with CK2 and PKD kinases. CSN-dependent phosphorylation of TP53 and JUN promotes and protects degradation by the Ubl system, respectively. The polypeptide is COP9 signalosome complex subunit 7a (COPS7A) (Pongo abelii (Sumatran orangutan)).